The chain runs to 527 residues: Peptide chain release factor 3 (527 aa).

In terms of domain architecture, tr-type G spans 10–278; sequence DRRRTFAIIS…TFVENAPAPL (269 aa). Residues 19–26, 87–91, and 141–144 each bind GTP; these read SHPDAGKT, DTPGH, and NKLD.

Belongs to the TRAFAC class translation factor GTPase superfamily. Classic translation factor GTPase family. PrfC subfamily.

It is found in the cytoplasm. Its function is as follows. Increases the formation of ribosomal termination complexes and stimulates activities of RF-1 and RF-2. It binds guanine nucleotides and has strong preference for UGA stop codons. It may interact directly with the ribosome. The stimulation of RF-1 and RF-2 is significantly reduced by GTP and GDP, but not by GMP. This chain is Peptide chain release factor 3, found in Geobacter metallireducens (strain ATCC 53774 / DSM 7210 / GS-15).